Reading from the N-terminus, the 113-residue chain is Ribonuclease P protein component (113 aa).

The protein belongs to the RnpA family. In terms of assembly, consists of a catalytic RNA component (M1 or rnpB) and a protein subunit.

The enzyme catalyses Endonucleolytic cleavage of RNA, removing 5'-extranucleotides from tRNA precursor.. RNaseP catalyzes the removal of the 5'-leader sequence from pre-tRNA to produce the mature 5'-terminus. It can also cleave other RNA substrates such as 4.5S RNA. The protein component plays an auxiliary but essential role in vivo by binding to the 5'-leader sequence and broadening the substrate specificity of the ribozyme. The chain is Ribonuclease P protein component from Ligilactobacillus salivarius (strain UCC118) (Lactobacillus salivarius).